The following is a 153-amino-acid chain: Sperm surface protein Sp17 (153 aa).

Residues 74–117 (FKVPSGATESKEAPPEKSEPEKETPQEVVKEQETQVSFVEEVST) are disordered. Positions 82-106 (ESKEAPPEKSEPEKETPQEVVKEQE) are enriched in basic and acidic residues. Positions 122 to 151 (AAAAAVKIQAAFRGHKARKEVKIMKESSIE) constitute an IQ domain.

In terms of assembly, homodimer. May interact with ROPN1. In terms of tissue distribution, testis- and sperm-specific.

Its subcellular location is the membrane. Sperm surface zona pellucida binding protein. Helps to bind spermatozoa to the zona pellucida with high affinity. Might function in binding zona pellucida and carbohydrates. The chain is Sperm surface protein Sp17 (SPA17) from Notamacropus eugenii (Tammar wallaby).